Consider the following 201-residue polypeptide: Pyridoxine/pyridoxamine 5'-phosphate oxidase (201 aa).

Residues 49 to 54, 64 to 65, lysine 71, and glutamine 93 contribute to the FMN site; these read RMVLLK and YT. Residue lysine 54 coordinates substrate. Residues tyrosine 111, arginine 115, and serine 119 each coordinate substrate. FMN contacts are provided by residues 128-129 and tryptophan 172; that span reads QS. 178–180 is a substrate binding site; the sequence is RLH. FMN is bound at residue arginine 182.

It belongs to the pyridoxamine 5'-phosphate oxidase family. As to quaternary structure, homodimer. The cofactor is FMN.

The enzyme catalyses pyridoxamine 5'-phosphate + O2 + H2O = pyridoxal 5'-phosphate + H2O2 + NH4(+). The catalysed reaction is pyridoxine 5'-phosphate + O2 = pyridoxal 5'-phosphate + H2O2. Its pathway is cofactor metabolism; pyridoxal 5'-phosphate salvage; pyridoxal 5'-phosphate from pyridoxamine 5'-phosphate: step 1/1. It functions in the pathway cofactor metabolism; pyridoxal 5'-phosphate salvage; pyridoxal 5'-phosphate from pyridoxine 5'-phosphate: step 1/1. Functionally, catalyzes the oxidation of either pyridoxine 5'-phosphate (PNP) or pyridoxamine 5'-phosphate (PMP) into pyridoxal 5'-phosphate (PLP). This chain is Pyridoxine/pyridoxamine 5'-phosphate oxidase, found in Roseobacter denitrificans (strain ATCC 33942 / OCh 114) (Erythrobacter sp. (strain OCh 114)).